We begin with the raw amino-acid sequence, 152 residues long: 3-hydroxyacyl-[acyl-carrier-protein] dehydratase FabZ (152 aa).

The active site involves H58.

This sequence belongs to the thioester dehydratase family. FabZ subfamily.

It localises to the cytoplasm. It carries out the reaction a (3R)-hydroxyacyl-[ACP] = a (2E)-enoyl-[ACP] + H2O. Its function is as follows. Involved in unsaturated fatty acids biosynthesis. Catalyzes the dehydration of short chain beta-hydroxyacyl-ACPs and long chain saturated and unsaturated beta-hydroxyacyl-ACPs. The protein is 3-hydroxyacyl-[acyl-carrier-protein] dehydratase FabZ of Prochlorococcus marinus (strain MIT 9301).